The primary structure comprises 989 residues: Phosphoenolpyruvate carboxylase (989 aa).

Residues His-175 and Lys-630 contribute to the active site.

The protein belongs to the PEPCase type 1 family. It depends on Mg(2+) as a cofactor.

The enzyme catalyses oxaloacetate + phosphate = phosphoenolpyruvate + hydrogencarbonate. Functionally, forms oxaloacetate, a four-carbon dicarboxylic acid source for the tricarboxylic acid cycle. This is Phosphoenolpyruvate carboxylase from Prochlorococcus marinus subsp. pastoris (strain CCMP1986 / NIES-2087 / MED4).